Here is a 905-residue protein sequence, read N- to C-terminus: Alanine--tRNA ligase (905 aa).

4 residues coordinate Zn(2+): H569, H573, C693, and H697.

It belongs to the class-II aminoacyl-tRNA synthetase family. Requires Zn(2+) as cofactor.

The protein resides in the cytoplasm. The catalysed reaction is tRNA(Ala) + L-alanine + ATP = L-alanyl-tRNA(Ala) + AMP + diphosphate. Catalyzes the attachment of alanine to tRNA(Ala) in a two-step reaction: alanine is first activated by ATP to form Ala-AMP and then transferred to the acceptor end of tRNA(Ala). Also edits incorrectly charged Ser-tRNA(Ala) and Gly-tRNA(Ala) via its editing domain. The chain is Alanine--tRNA ligase from Roseiflexus castenholzii (strain DSM 13941 / HLO8).